The sequence spans 598 residues: Probable transporter mch1 (598 aa).

A disordered region spans residues 1-49 (MASPTPAPRPDQISASTPLLQSDSTSSCASSIRSLSPSRRRHRNGRTSP). Residues 22–37 (SDSTSSCASSIRSLSP) show a composition bias toward low complexity. Asparagine 57 carries N-linked (GlcNAc...) asparagine glycosylation. Transmembrane regions (helical) follow at residues 63-83 (ALLS…GHIF), 96-116 (GLSS…GYMC), 122-142 (GPLS…AAGV), 164-184 (LAYA…CSMY), 202-222 (GLAL…QSQL), and 241-261 (VFHF…LGTF). Residues 315-334 (AGILDPSKPDNDSDSEEEDD) are disordered. N-linked (GlcNAc...) asparagine glycosylation is present at asparagine 325. Helical transmembrane passes span 355–375 (HTMW…EAFI), 405–425 (IVGI…DLLA), 453–473 (FLLF…SGWI), 486–506 (LVGA…TVIW), 516–536 (GIVA…YSAV), and 565–585 (SAFW…LWAW).

It belongs to the major facilitator superfamily.

Its subcellular location is the vacuole membrane. Functionally, probable transporter. In Neurospora crassa (strain ATCC 24698 / 74-OR23-1A / CBS 708.71 / DSM 1257 / FGSC 987), this protein is Probable transporter mch1 (mch1).